A 299-amino-acid polypeptide reads, in one-letter code: Protein sprouty homolog 4 (299 aa).

The residue at position 1 (methionine 1) is an N-acetylmethionine. Disordered regions lie at residues 50-79 (NDYI…PTPA) and 92-127 (FSGR…ASPR). Positions 92 to 107 (FSGRPSSVSSSSSTSS) are enriched in low complexity. Serine 125 carries the phosphoserine modification. The SPR domain maps to 166 to 273 (KCKECASPRT…GYDRLRRPGC (108 aa)).

This sequence belongs to the sprouty family. As to quaternary structure, interacts (via C-terminus) with TESK1 (via both C- and N-termini); the interaction inhibits TESK1 kinase activity. Interacts with RAF1. Interacts with CAV1 (via C-terminus).

The protein resides in the cytoplasm. It is found in the cell projection. It localises to the ruffle membrane. Suppresses the insulin receptor and EGFR-transduced MAPK signaling pathway, but does not inhibit MAPK activation by a constitutively active mutant Ras. Probably impairs the formation of GTP-Ras. Inhibits Ras-independent, but not Ras-dependent, activation of RAF1. Represses integrin-mediated cell spreading via inhibition of TESK1-mediated phosphorylation of cofilin. This chain is Protein sprouty homolog 4 (SPRY4), found in Bos taurus (Bovine).